The chain runs to 920 residues: MSTNEQLAWDFDDGDVAAVRPDTGIARFAPGSEQWIAALQPTDDDAIRLDRFDVNMMTAEAAARLWARVAAWVESDQIAYYIDDSPVSSDAAYDARMRCLERLEAAFPSLDNPQSPTHRVGGSFSNDFTSVRHPSRMMSLDDVFSIEELKDWYDSVIRDLDWPESKPLPMSCEVKIDGLALNLIYRNGVLEQGLTRGDGVTGEDITLNVRTIGSIPANLGGPKEDVPDFVEIRGEVFMRWDDFHTLNNEQEDAGRAPFANPRNAAAGSLRQKDPRITATRRLSFYAHGLGQLTWGPDHPRGTHDVVADQSQAYDLYTKWGVPVSPHNRAVTSFQEILDMIEYYGEHRGDIEHALDGIVVKVDDLGLQRTLGATSRAPRWAIAYKYPPEEVNTELLNITVQVGRTGRVTPVAVLKPVYVAGSTVARTTLHNGFEVKRKGILIGDTVVVRKAGDVIPELVGPVLERRKGREDQLREFVMPEFCPSCGAKLSPAKEGDKDIRCPNVESCPAQLTERVISLASRKAFDIEHLGEQSAIALTNPEENRPDSVATYAPNITEVLVAPGEEPDPYEPVEGLELPAAQKPVLSNESGLFNLTAADLRDVRVWREAAIVEVHETVGANGKKKKVRKRVGGSGLWHQVPAFWTAPTPAKKLTAKQLVERAQGEAAIESAETQGDTASETTGAPTGAEAPLGTMPGFAAASYPEYDVPADAVIVRVDHKTTRTGVTDVPVIIRPGENTRKMFDEMDKARHADLWRVLVALSIRRLGPPTARLIASAMGSLAAIENATIEDLTAIDGVGPEIAESVVNWFAATREPGDWRGATLRAWQAAGVGVDEAETSSLPQTLAGKTVVVTGSLEGYSRDSAKEAIIERGGKAAGSVSKKTDYVVIGANAGSKAAKAEELGIPMLSETQFAQLLATGTI.

Residues 90 to 94 (DAAYD), 139 to 140 (SL), and Glu173 contribute to the NAD(+) site. The active-site N6-AMP-lysine intermediate is Lys175. NAD(+)-binding residues include Arg196, Glu235, Lys360, and Lys384. The Zn(2+) site is built by Cys481, Cys484, Cys500, and Cys506. The tract at residues 662–691 (GEAAIESAETQGDTASETTGAPTGAEAPLG) is disordered. Residues 669 to 682 (AETQGDTASETTGA) show a composition bias toward polar residues. The BRCT domain maps to 839 to 920 (SLPQTLAGKT…FAQLLATGTI (82 aa)).

Belongs to the NAD-dependent DNA ligase family. LigA subfamily. Requires Mg(2+) as cofactor. Mn(2+) is required as a cofactor.

The enzyme catalyses NAD(+) + (deoxyribonucleotide)n-3'-hydroxyl + 5'-phospho-(deoxyribonucleotide)m = (deoxyribonucleotide)n+m + AMP + beta-nicotinamide D-nucleotide.. Functionally, DNA ligase that catalyzes the formation of phosphodiester linkages between 5'-phosphoryl and 3'-hydroxyl groups in double-stranded DNA using NAD as a coenzyme and as the energy source for the reaction. It is essential for DNA replication and repair of damaged DNA. The chain is DNA ligase from Bifidobacterium longum (strain DJO10A).